A 210-amino-acid polypeptide reads, in one-letter code: HTH-type transcriptional repressor ComR (210 aa).

The region spanning 18–78 (VFDRDAALDK…AVLDRYIDRF (61 aa)) is the HTH tetR-type domain. A DNA-binding region (H-T-H motif) is located at residues 41 to 60 (SLADLVEATGAKAPTLYAEF).

Binding to the promoter region of BhsA/ComC is released in the presence of copper. In terms of biological role, represses expression of BhsA/ComC by binding to its promoter region in the absence of copper. The sequence is that of HTH-type transcriptional repressor ComR (comR) from Escherichia coli (strain K12).